The sequence spans 196 residues: Small ribosomal subunit protein uS4c (196 aa).

The S4 RNA-binding domain occupies 89 to 150 (MRLDNIVFRL…NQRSKRLVQN (62 aa)).

The protein belongs to the universal ribosomal protein uS4 family. As to quaternary structure, part of the 30S ribosomal subunit. Contacts protein S5. The interaction surface between S4 and S5 is involved in control of translational fidelity.

Its subcellular location is the plastid. It is found in the chloroplast. One of the primary rRNA binding proteins, it binds directly to 16S rRNA where it nucleates assembly of the body of the 30S subunit. Its function is as follows. With S5 and S12 plays an important role in translational accuracy. In Eleusine indica (Goosegrass), this protein is Small ribosomal subunit protein uS4c (rps4).